The following is a 417-amino-acid chain: UPF0597 protein Cphy_1256 (417 aa).

This sequence belongs to the UPF0597 family.

The polypeptide is UPF0597 protein Cphy_1256 (Lachnoclostridium phytofermentans (strain ATCC 700394 / DSM 18823 / ISDg) (Clostridium phytofermentans)).